We begin with the raw amino-acid sequence, 830 residues long: Serine/threonine-protein kinase atg1 (830 aa).

In terms of domain architecture, Protein kinase spans 14 to 307 (YVIRSEIGRG…YDGFFSSIVV (294 aa)). ATP-binding positions include 20-28 (IGRGSFAIV) and lysine 43. Aspartate 157 (proton acceptor) is an active-site residue. Serine 346 carries the phosphoserine modification. The segment covering 448 to 468 (TQLSNESLTHEQSINGNSPSP) has biased composition (polar residues). The interval 448-480 (TQLSNESLTHEQSINGNSPSPNEGVFQGSFSPE) is disordered.

It belongs to the protein kinase superfamily. Ser/Thr protein kinase family. APG1/unc-51/ULK1 subfamily. Homodimer. Component of the atg1 kinase complex composed of at least atg1, atg13, atg17 and atg101. Interacts directly with atg13. In terms of processing, phosphorylated. Dephosphorylated under depletion of nitrogen.

It carries out the reaction L-seryl-[protein] + ATP = O-phospho-L-seryl-[protein] + ADP + H(+). The enzyme catalyses L-threonyl-[protein] + ATP = O-phospho-L-threonyl-[protein] + ADP + H(+). Serine/threonine protein kinase involved in the cytoplasm to vacuole transport (Cvt) and found to be essential in autophagy, where it is required for the formation of autophagosomes. Involved in the clearance of protein aggregates which cannot be efficiently cleared by the proteasome. Required for selective autophagic degradation of the nucleus (nucleophagy) as well as for mitophagy which contributes to regulate mitochondrial quantity and quality by eliminating the mitochondria to a basal level to fulfill cellular energy requirements and preventing excess ROS production. Also involved in endoplasmic reticulum-specific autophagic process, in selective removal of ER-associated degradation (ERAD) substrates. Plays a key role in ATG9 and ATG23 cycling through the pre-autophagosomal structure and is necessary to promote ATG18 binding to ATG9 through phosphorylation of ATG9. Catalyzes phosphorylation of ATG4, decreasing the interaction between ATG4 and ATG8 and impairing deconjugation of PE-conjugated forms of ATG8. Autophagy functions to supply nitrogen and is activated when cells cannot access exogenous nitrogen, thus ensuring that they can adapt and subsequently propagate. Finally, atg13 is also required for glycogen storage during stationary phase and has a role in meiosis and sporulation. In Schizosaccharomyces pombe (strain 972 / ATCC 24843) (Fission yeast), this protein is Serine/threonine-protein kinase atg1.